We begin with the raw amino-acid sequence, 180 residues long: UPF0340 protein RBAM_034070 (180 aa).

It belongs to the UPF0340 family.

In Bacillus velezensis (strain DSM 23117 / BGSC 10A6 / LMG 26770 / FZB42) (Bacillus amyloliquefaciens subsp. plantarum), this protein is UPF0340 protein RBAM_034070.